The primary structure comprises 162 residues: Phosphopantetheine adenylyltransferase (162 aa).

Ser9 contacts substrate. ATP-binding positions include 9-10 and His17; that span reads SF. Lys41, Leu73, and Lys87 together coordinate substrate. Residues 88–90, Glu98, and 123–129 each bind ATP; these read GLR and YAHLSSS.

The protein belongs to the bacterial CoaD family. In terms of assembly, homohexamer. It depends on Mg(2+) as a cofactor.

The protein localises to the cytoplasm. The enzyme catalyses (R)-4'-phosphopantetheine + ATP + H(+) = 3'-dephospho-CoA + diphosphate. The protein operates within cofactor biosynthesis; coenzyme A biosynthesis; CoA from (R)-pantothenate: step 4/5. Reversibly transfers an adenylyl group from ATP to 4'-phosphopantetheine, yielding dephospho-CoA (dPCoA) and pyrophosphate. This Symbiobacterium thermophilum (strain DSM 24528 / JCM 14929 / IAM 14863 / T) protein is Phosphopantetheine adenylyltransferase.